Consider the following 97-residue polypeptide: Protein MxiI (97 aa).

It to S.typhimurium PrgJ.

Functionally, necessary for the secretion of IPA invasins. The polypeptide is Protein MxiI (mxiI) (Shigella flexneri).